Reading from the N-terminus, the 432-residue chain is Putative transposase A625R (432 aa).

Residues Cys375, Cys378, Cys393, and Cys395 each coordinate Zn(2+).

In the N-terminal section; belongs to the transposase 2 family. This sequence in the C-terminal section; belongs to the transposase 35 family.

In Chlorella (PBCV-1), this protein is Putative transposase A625R.